We begin with the raw amino-acid sequence, 130 residues long: MAQVQYYGTGRRKSSVARVRLVSGEGRVIINGRDFENYIPFAALREVVKQPLVATETLGNYDVLVNVNGGGYTGQAGAIRHGISRALLKADPEYRLTLKRAGLLTRDARMKERKKYGLKGARRAPQFSKR.

Belongs to the universal ribosomal protein uS9 family.

The chain is Small ribosomal subunit protein uS9 from Bacillus anthracis (strain A0248).